A 780-amino-acid chain; its full sequence is Tricorn protease-interacting factor F3 (780 aa).

Substrate-binding positions include Glu101 and 230–234; that span reads GAMEN. Residue His265 participates in Zn(2+) binding. Glu266 serves as the catalytic Proton acceptor. The Zn(2+) site is built by His269 and Glu288.

The protein belongs to the peptidase M1 family. Part of the tricorn proteolytic complex. Zn(2+) is required as a cofactor.

It is found in the cytoplasm. In terms of biological role, proteases F1, F2 and F3 degrade oligopeptides produced by Tricorn (themselves probably produced by the proteasome), yielding free amino acids. The sequence is that of Tricorn protease-interacting factor F3 (trf3) from Thermoplasma acidophilum (strain ATCC 25905 / DSM 1728 / JCM 9062 / NBRC 15155 / AMRC-C165).